The chain runs to 426 residues: Ankyrin repeat-containing protein BDA1 (426 aa).

6 ANK repeats span residues 1–29, 36–65, 70–99, 104–134, 138–167, and 182–212; these read MDSK…DILQ, IIHT…SFAK, YGLS…SLVR, GGMT…SIKD, NGET…KMRD, and GGNT…DRNI. 4 consecutive transmembrane segments (helical) span residues 288-308, 329-349, 355-375, and 380-400; these read ALLV…AQLL, WGCN…LLPV, WWYF…MYMM, and FFFL…VLYV.

The protein resides in the cell membrane. Its function is as follows. Involved in plant defense. Required for basal resistance against Pseudomonas syringae pv. tomato DC3000. Required for resistance against nonpathogenic bacteria. May be involved in signaling components that function downstream of SNC2 and upstream of NPR1 and WRKY70 to regulate defense responses. In Arabidopsis thaliana (Mouse-ear cress), this protein is Ankyrin repeat-containing protein BDA1.